The following is a 447-amino-acid chain: Elongation factor 1-alpha (447 aa).

The region spanning 5–230 is the tr-type G domain; it reads KFHINIVVIG…DQINDAKRPS (226 aa). Residues 14–21 form a G1 region; sequence GHVDSGKS. 14-21 serves as a coordination point for GTP; sequence GHVDSGKS. An N6,N6-dimethyllysine modification is found at Lys55. The tract at residues 70–74 is G2; the sequence is GITID. Lys79 is modified (N6,N6,N6-trimethyllysine). Residues 91-94 form a G3 region; sequence DAPG. GTP-binding positions include 91-95 and 153-156; these read DAPGH and NKMD. A G4 region spans residues 153–156; that stretch reads NKMD. Residue Lys187 is modified to N6,N6,N6-trimethyllysine. Residues 194-196 are G5; sequence SGF. An N6-methyllysine modification is found at Lys261. A 5-glutamyl glycerylphosphorylethanolamine modification is found at Glu289. Lys306 carries the post-translational modification N6,N6,N6-trimethyllysine. Glu362 carries the post-translational modification 5-glutamyl glycerylphosphorylethanolamine. Lys396 is subject to N6,N6,N6-trimethyllysine.

This sequence belongs to the TRAFAC class translation factor GTPase superfamily. Classic translation factor GTPase family. EF-Tu/EF-1A subfamily. As to expression, was detected in all tissues examined but was most abundant in roots and salt-adapted cultured cells.

It is found in the cytoplasm. Functionally, this protein promotes the GTP-dependent binding of aminoacyl-tRNA to the A-site of ribosomes during protein biosynthesis. This is Elongation factor 1-alpha from Nicotiana tabacum (Common tobacco).